Consider the following 921-residue polypeptide: Bifunctional aspartokinase/homoserine dehydrogenase, chloroplastic (921 aa).

The N-terminal 87 residues, 1–87 (SLSSAISPSS…DDSVEKVHLP (87 aa)), are a transit peptide targeting the chloroplast. Residues 88–339 (RGAMWSIHKF…VSEAVVLKTL (252 aa)) form an aspartokinase region. The tract at residues 340 to 567 (SYQEAWEMSY…LSRTTIAVGI (228 aa)) is interface. ACT domains lie at 417–489 (VEGT…QVAN) and 498–575 (TVGQ…LIGA). A homoserine dehydrogenase region spans residues 568 to 921 (VGPGLIGATL…RLASYLGAPS (354 aa)). I573 contributes to the NAD(+) binding site. NADP(+) contacts are provided by I573, R605, T654, and K678. NADPH is bound at residue I573. Position 654 (T654) interacts with NAD(+). NADPH is bound by residues T654 and K678. The Na(+) site is built by E705, V708, A710, and L712. Residues G763 and E766 each coordinate NADP(+). Residues E766 and D777 each contribute to the L-homoserine site. Residue K781 is the Proton donor of the active site. Residue G898 coordinates NAD(+). G898 is an NADP(+) binding site. G898 serves as a coordination point for NADPH.

The protein in the N-terminal section; belongs to the aspartokinase family. In the C-terminal section; belongs to the homoserine dehydrogenase family. Requires a metal cation as cofactor.

It is found in the plastid. Its subcellular location is the chloroplast. The enzyme catalyses L-homoserine + NADP(+) = L-aspartate 4-semialdehyde + NADPH + H(+). The catalysed reaction is L-homoserine + NAD(+) = L-aspartate 4-semialdehyde + NADH + H(+). It catalyses the reaction L-aspartate + ATP = 4-phospho-L-aspartate + ADP. It participates in amino-acid biosynthesis; L-lysine biosynthesis via DAP pathway; (S)-tetrahydrodipicolinate from L-aspartate: step 1/4. The protein operates within amino-acid biosynthesis; L-methionine biosynthesis via de novo pathway; L-homoserine from L-aspartate: step 1/3. It functions in the pathway amino-acid biosynthesis; L-methionine biosynthesis via de novo pathway; L-homoserine from L-aspartate: step 3/3. Its pathway is amino-acid biosynthesis; L-threonine biosynthesis; L-threonine from L-aspartate: step 1/5. It participates in amino-acid biosynthesis; L-threonine biosynthesis; L-threonine from L-aspartate: step 3/5. Functionally, bifunctional aspartate kinase and homoserine dehydrogenase that catalyzes the first and the third steps toward the synthesis of lysine, methionine and threonine from aspartate. This Daucus carota (Wild carrot) protein is Bifunctional aspartokinase/homoserine dehydrogenase, chloroplastic.